The primary structure comprises 91 residues: Small ribosomal subunit protein uS19 (91 aa).

The protein belongs to the universal ribosomal protein uS19 family.

Its function is as follows. Protein S19 forms a complex with S13 that binds strongly to the 16S ribosomal RNA. The polypeptide is Small ribosomal subunit protein uS19 (Cupriavidus necator (strain ATCC 17699 / DSM 428 / KCTC 22496 / NCIMB 10442 / H16 / Stanier 337) (Ralstonia eutropha)).